The chain runs to 264 residues: [LysW]-aminoadipate/[LysW]-glutamate kinase (264 aa).

Substrate contacts are provided by residues 35 to 36, Arg-62, and Asn-167; that span reads GG.

The protein belongs to the acetylglutamate kinase family. LysZ subfamily.

It localises to the cytoplasm. The catalysed reaction is [amino-group carrier protein]-C-terminal-N-(1,4-dicarboxybutan-1-yl)-L-glutamine + ATP = [amino-group carrier protein]-C-terminal-N-(1-carboxy-5-phosphooxy-5-oxopentan-1-yl)-L-glutamine + ADP. The enzyme catalyses [amino-group carrier protein]-C-terminal-gamma-(L-glutamyl)-L-glutamate + ATP = [amino-group carrier protein]-C-terminal-gamma-(5-phospho-L-glutamyl)-L-glutamate + ADP. The protein operates within amino-acid biosynthesis; L-lysine biosynthesis via AAA pathway; L-lysine from L-alpha-aminoadipate (Thermus route): step 2/5. Its pathway is amino-acid biosynthesis; L-arginine biosynthesis. In terms of biological role, involved in both the arginine and lysine biosynthetic pathways. Phosphorylates the LysW-bound precursors glutamate (for arginine biosynthesis), respectively alpha-aminoadipate (for lysine biosynthesis). The polypeptide is [LysW]-aminoadipate/[LysW]-glutamate kinase (Saccharolobus islandicus (strain L.S.2.15 / Lassen #1) (Sulfolobus islandicus)).